Consider the following 414-residue polypeptide: Methyltransferase-like protein 2 (414 aa).

Positions 56–77 are disordered; it reads LNQHSSESNPKKRKRKQKNSSF.

The protein belongs to the MT-A70-like family.

Its function is as follows. Probable methyltransferase. This Arabidopsis thaliana (Mouse-ear cress) protein is Methyltransferase-like protein 2.